A 363-amino-acid chain; its full sequence is Protein-glutamate methylesterase/protein-glutamine glutaminase 3 (363 aa).

In terms of domain architecture, Response regulatory spans 8–125 (KVLCVDDSAL…RDGMLDYAEK (118 aa)). Aspartate 59 is modified (4-aspartylphosphate). Residues 164 to 356 (LVSTEKLIII…RRVMARLATM (193 aa)) form the CheB-type methylesterase domain. Active-site residues include serine 176, histidine 202, and aspartate 298.

Belongs to the CheB family. In terms of processing, phosphorylated by CheA. Phosphorylation of the N-terminal regulatory domain activates the methylesterase activity.

It is found in the cytoplasm. It carries out the reaction [protein]-L-glutamate 5-O-methyl ester + H2O = L-glutamyl-[protein] + methanol + H(+). The enzyme catalyses L-glutaminyl-[protein] + H2O = L-glutamyl-[protein] + NH4(+). In terms of biological role, involved in chemotaxis. Part of a chemotaxis signal transduction system that modulates chemotaxis in response to various stimuli. Catalyzes the demethylation of specific methylglutamate residues introduced into the chemoreceptors (methyl-accepting chemotaxis proteins or MCP) by CheR. Also mediates the irreversible deamidation of specific glutamine residues to glutamic acid. The protein is Protein-glutamate methylesterase/protein-glutamine glutaminase 3 of Burkholderia lata (strain ATCC 17760 / DSM 23089 / LMG 22485 / NCIMB 9086 / R18194 / 383).